Consider the following 618-residue polypeptide: Proline--tRNA ligase (618 aa).

This sequence belongs to the class-II aminoacyl-tRNA synthetase family. ProS type 1 subfamily. In terms of assembly, homodimer.

It is found in the cytoplasm. It carries out the reaction tRNA(Pro) + L-proline + ATP = L-prolyl-tRNA(Pro) + AMP + diphosphate. Its function is as follows. Catalyzes the attachment of proline to tRNA(Pro) in a two-step reaction: proline is first activated by ATP to form Pro-AMP and then transferred to the acceptor end of tRNA(Pro). As ProRS can inadvertently accommodate and process non-cognate amino acids such as alanine and cysteine, to avoid such errors it has two additional distinct editing activities against alanine. One activity is designated as 'pretransfer' editing and involves the tRNA(Pro)-independent hydrolysis of activated Ala-AMP. The other activity is designated 'posttransfer' editing and involves deacylation of mischarged Ala-tRNA(Pro). The misacylated Cys-tRNA(Pro) is not edited by ProRS. The chain is Proline--tRNA ligase from Streptococcus equi subsp. equi (strain 4047).